The following is a 299-amino-acid chain: Protoheme IX farnesyltransferase (299 aa).

9 helical membrane-spanning segments follow: residues 25–45, 47–67, 95–115, 119–139, 147–167, 173–193, 218–238, 243–263, and 277–297; these read VVLL…RAGV, WTVL…AAAV, AAAL…LLTF, LAAW…TGFL, IVIG…AVTG, PLLL…ALAI, VHIL…FAIH, LYLA…IALY, and FSIW…YLLL.

The protein belongs to the UbiA prenyltransferase family. Protoheme IX farnesyltransferase subfamily.

Its subcellular location is the cell inner membrane. It catalyses the reaction heme b + (2E,6E)-farnesyl diphosphate + H2O = Fe(II)-heme o + diphosphate. It participates in porphyrin-containing compound metabolism; heme O biosynthesis; heme O from protoheme: step 1/1. Functionally, converts heme B (protoheme IX) to heme O by substitution of the vinyl group on carbon 2 of heme B porphyrin ring with a hydroxyethyl farnesyl side group. The polypeptide is Protoheme IX farnesyltransferase (Stutzerimonas stutzeri (strain A1501) (Pseudomonas stutzeri)).